The sequence spans 210 residues: Large ribosomal subunit protein bL25 (210 aa).

The interval 190-210 is disordered; that stretch reads LKSEGAEGGEAEAGQAEEGEE. The span at 196–210 shows a compositional bias: acidic residues; sequence EGGEAEAGQAEEGEE.

The protein belongs to the bacterial ribosomal protein bL25 family. CTC subfamily. As to quaternary structure, part of the 50S ribosomal subunit; part of the 5S rRNA/L5/L18/L25 subcomplex. Contacts the 5S rRNA. Binds to the 5S rRNA independently of L5 and L18.

In terms of biological role, this is one of the proteins that binds to the 5S RNA in the ribosome where it forms part of the central protuberance. In Chelativorans sp. (strain BNC1), this protein is Large ribosomal subunit protein bL25.